The sequence spans 198 residues: Holliday junction branch migration complex subunit RuvA (198 aa).

The domain I stretch occupies residues Met1 to His63. The segment at Ser64 to Pro142 is domain II. The segment at Pro143–Gln147 is flexible linker. Residues Gln148–Gly198 form a domain III region.

Belongs to the RuvA family. In terms of assembly, homotetramer. Forms an RuvA(8)-RuvB(12)-Holliday junction (HJ) complex. HJ DNA is sandwiched between 2 RuvA tetramers; dsDNA enters through RuvA and exits via RuvB. An RuvB hexamer assembles on each DNA strand where it exits the tetramer. Each RuvB hexamer is contacted by two RuvA subunits (via domain III) on 2 adjacent RuvB subunits; this complex drives branch migration. In the full resolvosome a probable DNA-RuvA(4)-RuvB(12)-RuvC(2) complex forms which resolves the HJ.

It localises to the cytoplasm. The RuvA-RuvB-RuvC complex processes Holliday junction (HJ) DNA during genetic recombination and DNA repair, while the RuvA-RuvB complex plays an important role in the rescue of blocked DNA replication forks via replication fork reversal (RFR). RuvA specifically binds to HJ cruciform DNA, conferring on it an open structure. The RuvB hexamer acts as an ATP-dependent pump, pulling dsDNA into and through the RuvAB complex. HJ branch migration allows RuvC to scan DNA until it finds its consensus sequence, where it cleaves and resolves the cruciform DNA. The polypeptide is Holliday junction branch migration complex subunit RuvA (Streptococcus equi subsp. equi (strain 4047)).